The chain runs to 208 residues: High frequency lysogenization protein HflD homolog (208 aa).

Belongs to the HflD family.

It is found in the cytoplasm. It localises to the cell inner membrane. This is High frequency lysogenization protein HflD homolog from Edwardsiella ictaluri (strain 93-146).